The chain runs to 464 residues: Growth hormone-releasing hormone receptor (464 aa).

Positions 1 to 22 (MDSLLWATWVLCLLNLWGVALG) are cleaved as a signal peptide. The Extracellular segment spans residues 23–130 (HLHLECDFIT…EEKSYFSTVK (108 aa)). Cystine bridges form between C41–C64, C55–C96, and C78–C112. A glycan (N-linked (GlcNAc...) asparagine) is linked at N50. A helical transmembrane segment spans residues 131–151 (IIYTTGHSISIVALCVAIAIL). At 152–167 (VALRRLHCPRNYIHTQ) the chain is on the cytoplasmic side. A helical transmembrane segment spans residues 168–188 (LFATFILKASAVFLKDAAVFQ). Residues 189 to 210 (GDSTDHCSMSTILCKVSVAVSH) are Extracellular-facing. Residues 211-231 (FATMTNFSWLLAEAVYLSCLL) form a helical membrane-spanning segment. Residues 232–240 (ASTSPRSKP) lie on the Cytoplasmic side of the membrane. Residues 241-261 (AFWWLVLAGWGLPVLCTGTWV) form a helical membrane-spanning segment. The Extracellular segment spans residues 262–283 (GCKLAFEDTACWDLDDSSPYWW). A helical membrane pass occupies residues 284–304 (IIKGPIVLSVGVNFGLFLNII). Over 305–372 (CILLRKLGPA…QLPWRLSKST (68 aa)) the chain is Cytoplasmic. The chain crosses the membrane as a helical span at residues 373 to 393 (LLLIPLFGIHYIIFNFLPDSA). Residues 394–398 (GLGIR) are Extracellular-facing. The chain crosses the membrane as a helical span at residues 399 to 419 (LPLELGLGSFQGFVVAVLYCF). At 420-464 (LNQEVRTEISRKWYGHDPELLPARRTCTEWTTPPRSRVKVLTSEC) the chain is on the cytoplasmic side.

Belongs to the G-protein coupled receptor 2 family. As to expression, pituitary gland.

It localises to the cell membrane. Its function is as follows. Receptor for GRF, coupled to G proteins which activate adenylyl cyclase. Stimulates somatotroph cell growth, growth hormone gene transcription and growth hormone secretion. This is Growth hormone-releasing hormone receptor (Ghrhr) from Rattus norvegicus (Rat).